The chain runs to 179 residues: Large ribosomal subunit protein uL5 (179 aa).

Belongs to the universal ribosomal protein uL5 family. As to quaternary structure, part of the 50S ribosomal subunit; part of the 5S rRNA/L5/L18/L25 subcomplex. Contacts the 5S rRNA and the P site tRNA. Forms a bridge to the 30S subunit in the 70S ribosome.

Its function is as follows. This is one of the proteins that bind and probably mediate the attachment of the 5S RNA into the large ribosomal subunit, where it forms part of the central protuberance. In the 70S ribosome it contacts protein S13 of the 30S subunit (bridge B1b), connecting the 2 subunits; this bridge is implicated in subunit movement. Contacts the P site tRNA; the 5S rRNA and some of its associated proteins might help stabilize positioning of ribosome-bound tRNAs. This chain is Large ribosomal subunit protein uL5, found in Desulfitobacterium hafniense (strain Y51).